Consider the following 218-residue polypeptide: Putative tRNA methyltransferase MG248 (218 aa).

Belongs to the TrmK family.

The protein localises to the cytoplasm. In Mycoplasma genitalium (strain ATCC 33530 / DSM 19775 / NCTC 10195 / G37) (Mycoplasmoides genitalium), this protein is Putative tRNA methyltransferase MG248.